Here is a 452-residue protein sequence, read N- to C-terminus: General transcription and DNA repair factor IIH subunit TFB2 (452 aa).

It belongs to the TFB2 family. As to quaternary structure, component of the 7-subunit TFIIH core complex composed of XPB, XPD, TFB1/GTF2H1, GTF2H2/P44, TFB4/GTF2H3, TFB2/GTF2H4 and TFB5/GTF2H5, which is active in NER. The core complex associates with the 3-subunit CDK-activating kinase (CAK) module composed of CYCH1/cyclin H1, CDKD and MAT1/At4g30820 to form the 10-subunit holoenzyme (holo-TFIIH) active in transcription.

It localises to the nucleus. Component of the general transcription and DNA repair factor IIH (TFIIH) core complex, which is involved in general and transcription-coupled nucleotide excision repair (NER) of damaged DNA and, when complexed to CAK, in RNA transcription by RNA polymerase II. In NER, TFIIH acts by opening DNA around the lesion to allow the excision of the damaged oligonucleotide and its replacement by a new DNA fragment. In transcription, TFIIH has an essential role in transcription initiation. When the pre-initiation complex (PIC) has been established, TFIIH is required for promoter opening and promoter escape. Phosphorylation of the C-terminal tail (CTD) of the largest subunit of RNA polymerase II by the kinase module CAK controls the initiation of transcription. This is General transcription and DNA repair factor IIH subunit TFB2 from Arabidopsis thaliana (Mouse-ear cress).